Consider the following 101-residue polypeptide: Large ribosomal subunit protein uL23 (101 aa).

The protein belongs to the universal ribosomal protein uL23 family. In terms of assembly, part of the 50S ribosomal subunit. Contacts protein L29, and trigger factor when it is bound to the ribosome.

Its function is as follows. One of the early assembly proteins it binds 23S rRNA. One of the proteins that surrounds the polypeptide exit tunnel on the outside of the ribosome. Forms the main docking site for trigger factor binding to the ribosome. The polypeptide is Large ribosomal subunit protein uL23 (Rhodococcus jostii (strain RHA1)).